A 469-amino-acid polypeptide reads, in one-letter code: ATP synthase subunit beta (469 aa).

Residue 153-160 (GGAGVGKT) coordinates ATP.

This sequence belongs to the ATPase alpha/beta chains family. In terms of assembly, F-type ATPases have 2 components, CF(1) - the catalytic core - and CF(0) - the membrane proton channel. CF(1) has five subunits: alpha(3), beta(3), gamma(1), delta(1), epsilon(1). CF(0) has three main subunits: a(1), b(2) and c(9-12). The alpha and beta chains form an alternating ring which encloses part of the gamma chain. CF(1) is attached to CF(0) by a central stalk formed by the gamma and epsilon chains, while a peripheral stalk is formed by the delta and b chains.

Its subcellular location is the cell inner membrane. It carries out the reaction ATP + H2O + 4 H(+)(in) = ADP + phosphate + 5 H(+)(out). In terms of biological role, produces ATP from ADP in the presence of a proton gradient across the membrane. The catalytic sites are hosted primarily by the beta subunits. This is ATP synthase subunit beta from Pseudothermotoga lettingae (strain ATCC BAA-301 / DSM 14385 / NBRC 107922 / TMO) (Thermotoga lettingae).